The sequence spans 119 residues: MRQNTILENVTSAQLRSDIPEFRAGDTVKVYAKIVEGSRERIQLFEGVVIKRKGSGIQATYTVRKISSGVGVERTFPLHSPRVEKIEVVRFGAVRRAKLYYLRALQGKAARIKERRRDV.

The protein belongs to the bacterial ribosomal protein bL19 family.

In terms of biological role, this protein is located at the 30S-50S ribosomal subunit interface and may play a role in the structure and function of the aminoacyl-tRNA binding site. In Leuconostoc citreum (strain KM20), this protein is Large ribosomal subunit protein bL19.